A 410-amino-acid chain; its full sequence is Peptidase T-like protein YPO1009/y3403/YP_3421 (410 aa).

Residue His82 coordinates Zn(2+). Asp84 is a catalytic residue. Asp144 lines the Zn(2+) pocket. The active-site Proton acceptor is the Glu176. Zn(2+) is bound by residues Glu177, Asp200, and His382.

The protein belongs to the peptidase M20B family. The cofactor is Zn(2+).

The chain is Peptidase T-like protein YPO1009/y3403/YP_3421 from Yersinia pestis.